A 100-amino-acid chain; its full sequence is Large ribosomal subunit protein eL36A (100 aa).

An N-acetylthreonine modification is found at Thr-2.

The protein belongs to the eukaryotic ribosomal protein eL36 family. In terms of assembly, component of the large ribosomal subunit (LSU). Mature yeast ribosomes consist of a small (40S) and a large (60S) subunit. The 40S small subunit contains 1 molecule of ribosomal RNA (18S rRNA) and 33 different proteins (encoded by 57 genes). The large 60S subunit contains 3 rRNA molecules (25S, 5.8S and 5S rRNA) and 46 different proteins (encoded by 81 genes). Post-translationally, N-terminally acetylated by acetyltransferase NatA.

Its subcellular location is the cytoplasm. In terms of biological role, component of the ribosome, a large ribonucleoprotein complex responsible for the synthesis of proteins in the cell. The small ribosomal subunit (SSU) binds messenger RNAs (mRNAs) and translates the encoded message by selecting cognate aminoacyl-transfer RNA (tRNA) molecules. The large subunit (LSU) contains the ribosomal catalytic site termed the peptidyl transferase center (PTC), which catalyzes the formation of peptide bonds, thereby polymerizing the amino acids delivered by tRNAs into a polypeptide chain. The nascent polypeptides leave the ribosome through a tunnel in the LSU and interact with protein factors that function in enzymatic processing, targeting, and the membrane insertion of nascent chains at the exit of the ribosomal tunnel. This chain is Large ribosomal subunit protein eL36A, found in Saccharomyces cerevisiae (strain ATCC 204508 / S288c) (Baker's yeast).